Reading from the N-terminus, the 299-residue chain is tRNA dimethylallyltransferase (299 aa).

Position 10-17 (10-17) interacts with ATP; the sequence is GATATGKS. 12–17 provides a ligand contact to substrate; that stretch reads TATGKS. The interval 35 to 38 is interaction with substrate tRNA; it reads DSRQ.

It belongs to the IPP transferase family. As to quaternary structure, monomer. Mg(2+) is required as a cofactor.

It catalyses the reaction adenosine(37) in tRNA + dimethylallyl diphosphate = N(6)-dimethylallyladenosine(37) in tRNA + diphosphate. Its function is as follows. Catalyzes the transfer of a dimethylallyl group onto the adenine at position 37 in tRNAs that read codons beginning with uridine, leading to the formation of N6-(dimethylallyl)adenosine (i(6)A). This chain is tRNA dimethylallyltransferase, found in Rippkaea orientalis (strain PCC 8801 / RF-1) (Cyanothece sp. (strain PCC 8801)).